We begin with the raw amino-acid sequence, 658 residues long: Protein translocase subunit SecA 3 (658 aa).

ATP is bound by residues Gln-111, 129–133 (GEGKT), and Asp-536.

It belongs to the SecA family. As to quaternary structure, monomer and homodimer. Part of the essential Sec protein translocation apparatus which comprises SecA, SecYEG and auxiliary proteins SecDF-YajC and YidC.

Its subcellular location is the cell inner membrane. It localises to the cytoplasm. It carries out the reaction ATP + H2O + cellular proteinSide 1 = ADP + phosphate + cellular proteinSide 2.. Its function is as follows. Part of the Sec protein translocase complex. Interacts with the SecYEG preprotein conducting channel. Has a central role in coupling the hydrolysis of ATP to the transfer of proteins into and across the cell membrane, serving both as a receptor for the preprotein-SecB complex and as an ATP-driven molecular motor driving the stepwise translocation of polypeptide chains across the membrane. This chain is Protein translocase subunit SecA 3, found in Magnetococcus marinus (strain ATCC BAA-1437 / JCM 17883 / MC-1).